The following is a 235-amino-acid chain: Ribitol-5-phosphate cytidylyltransferase (235 aa).

CTP contacts are provided by residues 7–10 (LAGG), 82–88 (GADRNTS), and S113.

It belongs to the IspD/TarI cytidylyltransferase family. TarI subfamily.

It catalyses the reaction D-ribitol 5-phosphate + CTP + H(+) = CDP-L-ribitol + diphosphate. It functions in the pathway cell wall biogenesis; poly(ribitol phosphate) teichoic acid biosynthesis. Catalyzes the transfer of the cytidylyl group of CTP to D-ribitol 5-phosphate. The chain is Ribitol-5-phosphate cytidylyltransferase from Streptococcus pneumoniae (strain Hungary19A-6).